Here is a 1275-residue protein sequence, read N- to C-terminus: MAIVKRGARSKAKQEAPAKSGIKKAEFDLHKKKEVGVSDLTLLSKISDDSINDNLHKRFMNNTIYTYIGHVLISVNPFQDLGIYTKEYLNMYKGKNRLEVPPHVFAIAESMYYHLKSYGESQCVIISGESGAGKTEAAKQIMQYIANVSVDDKVSTTSEITQIKDMVLATNPLLESFGCAKTLRNNNSSRHGKYLEIYFNPSNYQPVAAHITNYLLEKQRVVSQITNERNFHIFYQLTKSCPPEYKQSFGLQGPETYVYTSAAKCIDVEGINDGKDFAETLQAMNTIGLSKAEQDNIFRSLASILWIGNISFVENEDGNAAIRDDTVTTFVAYLLEVDANVLKKSILERVIETSHGMRRGSTYHVPLNIVQATASRDALAKGIYNYLFDWIVERVNISLRGRAEAMEKKTIGILDIYGFEIFEHNSFEQICINYVNEKLQQIFIQLTLKAEQDEYVQEQIKWTPIDYFNNKVVCDLIEATRPQPGLFAALNDSIKTAHADSDAADQVFAQRLSMVGANNRHFEDRKGKFIIKHYAGDVVYDVAGMTDKNKDAMLRDLLEMLSTSQNTFVNSVLFPPDLLAVLTDKKKRPETASDKIKKSANLLVDTLSQCQPSYIRTIKPNQTKRPKEYDNAQVLHQVKYLGLKENVRIRRAGFAYRTTFDKFVQRFYLLSPKTGYAGDYIWNGDDISAVREILKSCHIPDTEFQMGTSKVFIKTPETLFAMEDMRDKYWHNMAARIQRAWRRYVKRKEDAARLIQNAWKVKKHGNQFEQLRDYGNGLLQGRKERRRMSMLGSRAFMGDYLGCNYSSGFGRFVLNQVGLNEHVVFSGKGEILLSKFGRSSKRLPRIFVLGRSSLYIIAENLVERRLQLSKEFVIPINSINYVGLSTFQDNWLAVSLHSPTPTTPDVLINLDFKTELVTHLKKLNPGLTIKIGPTIEYQKKPGKFHTVKFVRSDVSTIPIHGDVYKSGTVSVRPGLSPDSQNPKRPRATSSKVDYSKYYNRGGRLAPARTVPPAHPTSQQRTPVAPPSHATQQQPSYPTPVAPVHQQPNNHVRKVPPPAPSLNNNHQEAVTAATAAMNHVNIQQPATVVQNHNSNPTAPSRPAKKAAPAPPVKKTAPPPPPSLSAAKPKWPTFKANYDYDGSVSGSMALSANDIVYITQNNGQWSLAKSLDESKEGWVPTAYISECPPPSNLGGSKSPPPPPPPSATTRTVPEQGGNAAAAASTQQEGGLSNGLAGALLAKKNEETNLAGSIADALKKRSATRDSDDEEEDDDDDW.

A Myosin motor domain is found at Val-35 to Asp-727. Gly-128–Thr-135 serves as a coordination point for ATP. Ser-361 carries the post-translational modification Phosphoserine. The actin-binding stretch occupies residues Thr-410–Ser-493. IQ domains are found at residues His-731–Ala-751 and Ala-752–Gly-777. The region spanning Arg-785–Gly-974 is the TH1 domain. Disordered stretches follow at residues Ser-966 to Asn-1064, Gln-1089 to Lys-1128, Ser-1183 to Ser-1230, and Ile-1251 to Trp-1275. Residues Pro-977–Val-992 show a composition bias toward polar residues. The segment covering Pro-1095–Ala-1106 has biased composition (low complexity). A compositionally biased stretch (pro residues) spans Pro-1107–Ser-1121. Positions Pro-1127–Pro-1187 constitute an SH3 domain. The segment covering Ala-1254–Asp-1263 has biased composition (basic and acidic residues). Residues Ser-1264 to Trp-1275 show a composition bias toward acidic residues.

Belongs to the TRAFAC class myosin-kinesin ATPase superfamily. Myosin family. In terms of processing, phosphorylation of the TEDS site (Ser-361) is required for the polarization of the actin cytoskeleton. Phosphorylation probably activates the myosin-I ATPase activity.

The protein resides in the cytoplasm. It is found in the cytoskeleton. It localises to the actin patch. Its function is as follows. Type-I myosin implicated in the organization of the actin cytoskeleton. Required for proper actin cytoskeleton polarization. At the cell cortex, assembles in patch-like structures together with proteins from the actin-polymerizing machinery and promotes actin assembly. Functions as actin nucleation-promoting factor (NPF) for the Arp2/3 complex. This is Myosin-1 (MYO1) from Meyerozyma guilliermondii (strain ATCC 6260 / CBS 566 / DSM 6381 / JCM 1539 / NBRC 10279 / NRRL Y-324) (Yeast).